A 98-amino-acid polypeptide reads, in one-letter code: NADH-ubiquinone oxidoreductase chain 4L (98 aa).

Helical transmembrane passes span 1 to 21, 29 to 49, and 61 to 81; these read MSMV…GLLM, SLLC…VTIL, and IILL…LVMV.

It belongs to the complex I subunit 4L family. Core subunit of respiratory chain NADH dehydrogenase (Complex I) which is composed of 45 different subunits.

It is found in the mitochondrion inner membrane. It carries out the reaction a ubiquinone + NADH + 5 H(+)(in) = a ubiquinol + NAD(+) + 4 H(+)(out). Core subunit of the mitochondrial membrane respiratory chain NADH dehydrogenase (Complex I) which catalyzes electron transfer from NADH through the respiratory chain, using ubiquinone as an electron acceptor. Part of the enzyme membrane arm which is embedded in the lipid bilayer and involved in proton translocation. The chain is NADH-ubiquinone oxidoreductase chain 4L (MT-ND4L) from Halichoerus grypus (Gray seal).